A 290-amino-acid polypeptide reads, in one-letter code: Lipoyl synthase (290 aa).

7 residues coordinate [4Fe-4S] cluster: C38, C43, C49, C64, C68, C71, and S277. In terms of domain architecture, Radical SAM core spans W50 to R266.

The protein belongs to the radical SAM superfamily. Lipoyl synthase family. The cofactor is [4Fe-4S] cluster.

The protein localises to the cytoplasm. It carries out the reaction [[Fe-S] cluster scaffold protein carrying a second [4Fe-4S](2+) cluster] + N(6)-octanoyl-L-lysyl-[protein] + 2 oxidized [2Fe-2S]-[ferredoxin] + 2 S-adenosyl-L-methionine + 4 H(+) = [[Fe-S] cluster scaffold protein] + N(6)-[(R)-dihydrolipoyl]-L-lysyl-[protein] + 4 Fe(3+) + 2 hydrogen sulfide + 2 5'-deoxyadenosine + 2 L-methionine + 2 reduced [2Fe-2S]-[ferredoxin]. Its pathway is protein modification; protein lipoylation via endogenous pathway; protein N(6)-(lipoyl)lysine from octanoyl-[acyl-carrier-protein]: step 2/2. Functionally, catalyzes the radical-mediated insertion of two sulfur atoms into the C-6 and C-8 positions of the octanoyl moiety bound to the lipoyl domains of lipoate-dependent enzymes, thereby converting the octanoylated domains into lipoylated derivatives. This is Lipoyl synthase from Chlorobaculum tepidum (strain ATCC 49652 / DSM 12025 / NBRC 103806 / TLS) (Chlorobium tepidum).